The chain runs to 367 residues: tRNA-specific 2-thiouridylase MnmA (367 aa).

ATP contacts are provided by residues 13–20 (GLSGGVDS) and Met-39. The interaction with target base in tRNA stretch occupies residues 99–101 (NPD). The active-site Nucleophile is Cys-104. The cysteines at positions 104 and 200 are disulfide-linked. ATP is bound at residue Gly-128. An interaction with tRNA region spans residues 150 to 152 (KDQ). The Cysteine persulfide intermediate role is filled by Cys-200. Residues 307 to 308 (RY) form an interaction with tRNA region.

Belongs to the MnmA/TRMU family.

The protein resides in the cytoplasm. It carries out the reaction S-sulfanyl-L-cysteinyl-[protein] + uridine(34) in tRNA + AH2 + ATP = 2-thiouridine(34) in tRNA + L-cysteinyl-[protein] + A + AMP + diphosphate + H(+). In terms of biological role, catalyzes the 2-thiolation of uridine at the wobble position (U34) of tRNA, leading to the formation of s(2)U34. This is tRNA-specific 2-thiouridylase MnmA from Neisseria meningitidis serogroup C / serotype 2a (strain ATCC 700532 / DSM 15464 / FAM18).